A 196-amino-acid polypeptide reads, in one-letter code: ECF RNA polymerase sigma factor SigK (196 aa).

A sigma-70 factor domain-2 region spans residues tyrosine 39–glutamine 105. A Polymerase core binding motif is present at residues glutamate 62 to glutamine 65. The segment at cysteine 142–lysine 191 is sigma-70 factor domain-4. The H-T-H motif DNA-binding region spans tyrosine 164–arginine 183.

Belongs to the sigma-70 factor family. ECF subfamily. Interacts transiently with the RNA polymerase catalytic core formed by RpoA, RpoB, RpoC and RpoZ (2 alpha, 1 beta, 1 beta' and 1 omega subunit) to form the RNA polymerase holoenzyme that can initiate transcription. Interacts (via sigma-70 factor domain 4) with anti-sigma-K factor RskA.

Functionally, sigma factors are initiation factors that promote the attachment of RNA polymerase to specific initiation sites and are then released. Extracytoplasmic function (ECF) sigma factors are held in an inactive form by an anti-sigma factor until released by regulated intramembrane proteolysis. The sequence is that of ECF RNA polymerase sigma factor SigK (sigK) from Mycolicibacterium vanbaalenii (strain DSM 7251 / JCM 13017 / BCRC 16820 / KCTC 9966 / NRRL B-24157 / PYR-1) (Mycobacterium vanbaalenii).